The primary structure comprises 310 residues: Ribosomal RNA small subunit methyltransferase H (310 aa).

S-adenosyl-L-methionine is bound by residues Ala33–His35, Asp53, Phe79, Asp100, and Gln107.

It belongs to the methyltransferase superfamily. RsmH family.

Its subcellular location is the cytoplasm. It carries out the reaction cytidine(1402) in 16S rRNA + S-adenosyl-L-methionine = N(4)-methylcytidine(1402) in 16S rRNA + S-adenosyl-L-homocysteine + H(+). Specifically methylates the N4 position of cytidine in position 1402 (C1402) of 16S rRNA. The protein is Ribosomal RNA small subunit methyltransferase H of Desulfitobacterium hafniense (strain DSM 10664 / DCB-2).